The primary structure comprises 178 residues: Inorganic pyrophosphatase (178 aa).

Residues lysine 30, arginine 44, and tyrosine 56 each coordinate substrate. 3 residues coordinate Mg(2+): aspartate 66, aspartate 71, and aspartate 103. Tyrosine 142 is a binding site for substrate.

This sequence belongs to the PPase family. As to quaternary structure, homohexamer. Mg(2+) is required as a cofactor.

The protein localises to the cytoplasm. It carries out the reaction diphosphate + H2O = 2 phosphate + H(+). Catalyzes the hydrolysis of inorganic pyrophosphate (PPi) forming two phosphate ions. The protein is Inorganic pyrophosphatase of Bradyrhizobium diazoefficiens (strain JCM 10833 / BCRC 13528 / IAM 13628 / NBRC 14792 / USDA 110).